Reading from the N-terminus, the 465-residue chain is VGFKAGVKDYKLTYYTPEYETKDTDILAAFRVTPQPGVPPEEAGAAVAAESSTGTWTTVWTDGLTSLDRYKGRCYHIEPVAGEENQYIAYVAYPLDLFEEGSVTNMFTSIVGNVFGFKALRALRLEDLRVPTSYIKTFQGPPHGIQVERDKLNKYGRPLLGCTIKPKLGLSAKNYGRAVYECLRGGLDFTKDDENVNSQPFMRWRDRFLFCAEAIYKAQAETGEIKGHYLNATAGTCEEMIKRAVCARELGAPIVMHDYLTGGFTANTTLAHYCRDNGLLLHIHRAMHAVIDRQKNHGMHFRVLAKALRLSGGDHIHAGTVVGKLEGEREITLGFVDLLRDDFVEKDRSRGIYFTQDWVSLPGVLPVASGGIHVWHMPALTEIFGDDSVLQFGGGTLGHPWGNAPGAVANRVALEACVQARNEGRDLAREGNEIIREASKWSPELAAACEVWKAIKFEFPAMDTL.

N6,N6,N6-trimethyllysine is present on Lys-4. Substrate contacts are provided by Asn-113 and Thr-163. Catalysis depends on Lys-165, which acts as the Proton acceptor. Lys-167 contacts substrate. Residues Lys-191, Asp-193, and Glu-194 each coordinate Mg(2+). The residue at position 191 (Lys-191) is an N6-carboxylysine. His-284 acts as the Proton acceptor in catalysis. Substrate-binding residues include Arg-285, His-317, and Ser-369.

This sequence belongs to the RuBisCO large chain family. Type I subfamily. As to quaternary structure, heterohexadecamer of 8 large chains and 8 small chains; disulfide-linked. The disulfide link is formed within the large subunit homodimers. The cofactor is Mg(2+). In terms of processing, the disulfide bond which can form in the large chain dimeric partners within the hexadecamer appears to be associated with oxidative stress and protein turnover.

It is found in the plastid. It localises to the chloroplast. The enzyme catalyses 2 (2R)-3-phosphoglycerate + 2 H(+) = D-ribulose 1,5-bisphosphate + CO2 + H2O. It carries out the reaction D-ribulose 1,5-bisphosphate + O2 = 2-phosphoglycolate + (2R)-3-phosphoglycerate + 2 H(+). RuBisCO catalyzes two reactions: the carboxylation of D-ribulose 1,5-bisphosphate, the primary event in carbon dioxide fixation, as well as the oxidative fragmentation of the pentose substrate in the photorespiration process. Both reactions occur simultaneously and in competition at the same active site. The sequence is that of Ribulose bisphosphate carboxylase large chain from Clitoria ternatea (Butterfly pea).